A 697-amino-acid polypeptide reads, in one-letter code: Beta-galactosidase 17 (697 aa).

Residues 1–35 (MAMTSWPSTGRQRRHQLASMLLLVLVVVGIYVPVF) form the signal peptide. The Proton donor role is filled by Glu218. Glu301 functions as the Nucleophile in the catalytic mechanism. Asn333, Asn519, Asn573, Asn583, and Asn690 each carry an N-linked (GlcNAc...) asparagine glycan.

Belongs to the glycosyl hydrolase 35 family. In terms of tissue distribution, ubiquitous, with higher expression levels in roots and siliques.

Its subcellular location is the secreted. It localises to the extracellular space. The protein resides in the apoplast. The catalysed reaction is Hydrolysis of terminal non-reducing beta-D-galactose residues in beta-D-galactosides.. The sequence is that of Beta-galactosidase 17 (BGAL17) from Arabidopsis thaliana (Mouse-ear cress).